The primary structure comprises 109 residues: uncharacterized protein (109 aa).

The chain crosses the membrane as a helical span at residues 90–107; that stretch reads IICNFWGSLLGVGIAFYQ.

The protein localises to the membrane. This is an uncharacterized protein from Saccharomyces cerevisiae (strain ATCC 204508 / S288c) (Baker's yeast).